A 548-amino-acid polypeptide reads, in one-letter code: Probable malate:quinone oxidoreductase (548 aa).

Residues 520–548 (YDRPQAADSTPKPQLKPQPVQKEVADIAL) form a disordered region. Residues 530-541 (PKPQLKPQPVQK) are compositionally biased toward low complexity.

This sequence belongs to the MQO family. Requires FAD as cofactor.

The enzyme catalyses (S)-malate + a quinone = a quinol + oxaloacetate. Its pathway is carbohydrate metabolism; tricarboxylic acid cycle; oxaloacetate from (S)-malate (quinone route): step 1/1. This Shigella dysenteriae serotype 1 (strain Sd197) protein is Probable malate:quinone oxidoreductase.